A 319-amino-acid polypeptide reads, in one-letter code: Ankyrin repeat domain-containing protein 1 (319 aa).

Positions 61 to 89 (KTEKQREAELKKKKLEQRSKLENLEDLEI) form a coiled coil. 5 ANK repeats span residues 152–181 (YKRT…QIEF), 185–214 (LEST…KISA), 218–247 (LLST…DLNA), 251–280 (EGDT…DLNV), and 284–315 (AGKT…KASR).

In terms of assembly, interacts with TTN/titin and YBX1.

The protein resides in the nucleus. In terms of biological role, may play an important role in endothelial cell activation. May act as a nuclear transcription factor that negatively regulates the expression of cardiac genes. The chain is Ankyrin repeat domain-containing protein 1 (ANKRD1) from Bos taurus (Bovine).